Reading from the N-terminus, the 121-residue chain is Large ribosomal subunit protein uL18 (121 aa).

This sequence belongs to the universal ribosomal protein uL18 family. In terms of assembly, part of the 50S ribosomal subunit; part of the 5S rRNA/L5/L18/L25 subcomplex. Contacts the 5S and 23S rRNAs.

Functionally, this is one of the proteins that bind and probably mediate the attachment of the 5S RNA into the large ribosomal subunit, where it forms part of the central protuberance. This is Large ribosomal subunit protein uL18 from Ureaplasma urealyticum serovar 10 (strain ATCC 33699 / Western).